We begin with the raw amino-acid sequence, 478 residues long: UDP-N-acetylmuramate--L-alanine ligase (478 aa).

120-126 (GSHGKTT) serves as a coordination point for ATP.

This sequence belongs to the MurCDEF family.

The protein resides in the cytoplasm. The enzyme catalyses UDP-N-acetyl-alpha-D-muramate + L-alanine + ATP = UDP-N-acetyl-alpha-D-muramoyl-L-alanine + ADP + phosphate + H(+). The protein operates within cell wall biogenesis; peptidoglycan biosynthesis. Functionally, cell wall formation. This is UDP-N-acetylmuramate--L-alanine ligase from Rickettsia felis (strain ATCC VR-1525 / URRWXCal2) (Rickettsia azadi).